A 51-amino-acid chain; its full sequence is Sperm protamine P1 (51 aa).

This sequence belongs to the protamine P1 family. In terms of tissue distribution, testis.

The protein localises to the nucleus. The protein resides in the chromosome. Functionally, protamines substitute for histones in the chromatin of sperm during the haploid phase of spermatogenesis. They compact sperm DNA into a highly condensed, stable and inactive complex. This Nasalis larvatus (Proboscis monkey) protein is Sperm protamine P1 (PRM1).